The following is a 368-amino-acid chain: CST complex subunit STN1 (368 aa).

The tract at residues 1-185 is interaction with CTC1; it reads MQPGSSRCEE…KIYDQPFRSS (185 aa). The OB DNA-binding region spans 57-155; that stretch reads VDVLGTVVGV…EIHATAYYKV (99 aa). Winged helix-turn-helix (wHTH) stretches follow at residues 191–295 and 296–368; these read EALS…YVTR and EDKD…YTAF.

It belongs to the STN1 family. As to quaternary structure, component of the CST complex, composed of TEN1/C17orf106, CTC1/C17orf68 and STN1; in the complex interacts directly with TEN1 and CTC1. Interacts with ACD/TPP1, POT1 and POLA1.

Its subcellular location is the nucleus. It localises to the chromosome. The protein resides in the telomere. Its function is as follows. Component of the CST complex proposed to act as a specialized replication factor promoting DNA replication under conditions of replication stress or natural replication barriers such as the telomere duplex. The CST complex binds single-stranded DNA with high affinity in a sequence-independent manner, while isolated subunits bind DNA with low affinity by themselves. Initially the CST complex has been proposed to protect telomeres from DNA degradation. However, the CST complex has been shown to be involved in several aspects of telomere replication. The CST complex inhibits telomerase and is involved in telomere length homeostasis; it is proposed to bind to newly telomerase-synthesized 3' overhangs and to terminate telomerase action implicating the association with the ACD:POT1 complex thus interfering with its telomerase stimulation activity. The CST complex is also proposed to be involved in fill-in synthesis of the telomeric C-strand probably implicating recruitment and activation of DNA polymerase alpha. The CST complex facilitates recovery from many forms of exogenous DNA damage; seems to be involved in the re-initiation of DNA replication at repaired forks and/or dormant origins. Required for efficicient replication of the duplex region of the telomere. Promotes efficient replication of lagging-strand telomeres. Promotes general replication start following replication-fork stalling implicating new origin firing. May be in involved in C-strand fill-in during late S/G2 phase independent of its role in telomere duplex replication. The chain is CST complex subunit STN1 from Macaca fascicularis (Crab-eating macaque).